The primary structure comprises 266 residues: Probable BRI1 kinase inhibitor 1 (266 aa).

2 disordered regions span residues 1-144 (MTMN…AKTR) and 167-242 (FSRH…SEES). A compositionally biased stretch (pro residues) spans 9–30 (RSQPPPPHPPLFKPTTPPPPPL). Over residues 31 to 40 (LSTSTSTSPP) the composition is skewed to low complexity. Residues 77 to 93 (LSHNNYSSKANQHRQTG) show a composition bias toward polar residues. Positions 100–109 (SKEKDREYKA) are enriched in basic and acidic residues. Low complexity-rich tracts occupy residues 210-221 (LSSAPASLRASP) and 229-241 (VGGS…SSEE).

In terms of biological role, negative regulator of brassinosteroid signaling. This chain is Probable BRI1 kinase inhibitor 1 (BKI1), found in Oryza sativa subsp. indica (Rice).